Here is a 128-residue protein sequence, read N- to C-terminus: L-ectoine synthase (128 aa).

The protein belongs to the ectoine synthase family.

It catalyses the reaction (2S)-4-acetamido-2-aminobutanoate = L-ectoine + H2O. The protein operates within amine and polyamine biosynthesis; ectoine biosynthesis; L-ectoine from L-aspartate 4-semialdehyde: step 3/3. In terms of biological role, catalyzes the circularization of gamma-N-acetyl-alpha,gamma-diaminobutyric acid (ADABA) to ectoine (1,4,5,6-tetrahydro-2-methyl-4-pyrimidine carboxylic acid), which is an excellent osmoprotectant. This chain is L-ectoine synthase, found in Vibrio campbellii (strain ATCC BAA-1116).